We begin with the raw amino-acid sequence, 406 residues long: Calsequestrin-1 (406 aa).

An N-terminal signal peptide occupies residues Met1 to Gly34. Tyr43 bears the Phosphotyrosine mark. Ser81 carries the phosphoserine modification. Position 124 is a phosphothreonine (Thr124). Ser216 carries the post-translational modification Phosphoserine. Residue Asn350 is glycosylated (N-linked (GlcNAc...) asparagine). Residues Glu382–Asp406 are disordered.

This sequence belongs to the calsequestrin family. Monomer; increases in response to a depletion of intracellular calcium. Homodimer. Homotetramer and homopolymer. Can form linear homooligomers. Ca(2+) ions promote oligomerization. Interacts (via C-terminal end and preferentially with the monomeric form) with STIM1; this interaction increases in response to a depletion of intracellular calcium, decreases both STIM1 aggregation and clustering, interaction of STIM1 with ORAI1 and store-operated Ca(2+) entry (SOCE) activity. Interacts with ASPH and TRDN. Post-translationally, N-glycosylated. As to expression, detected in skeletal muscle and in smooth muscle from vas deferens, aorta and stomach (at protein level).

The protein localises to the endoplasmic reticulum. It localises to the sarcoplasmic reticulum. Its subcellular location is the sarcoplasmic reticulum lumen. The protein resides in the sarcoplasmic reticulum membrane. It is found in the mitochondrion matrix. Its function is as follows. Calsequestrin is a high-capacity, moderate affinity, calcium-binding protein and thus acts as an internal calcium store in muscle. Calcium ions are bound by clusters of acidic residues at the protein surface, often at the interface between subunits. Can bind around 80 Ca(2+) ions. Regulates the release of lumenal Ca(2+) via the calcium release channel RYR1; this plays an important role in triggering muscle contraction. Negatively regulates store-operated Ca(2+) entry (SOCE) activity. This Rattus norvegicus (Rat) protein is Calsequestrin-1 (Casq1).